A 160-amino-acid chain; its full sequence is Lipoprotein signal peptidase (160 aa).

Helical transmembrane passes span 5–25 (LVFFVSTACGILADQLSKFII), 60–80 (IEWLIAASVLGVILAMTAFFI), and 84–104 (LPFLDTRPGLIALGVILAGTV). Catalysis depends on residues Asp118 and Asp132. The helical transmembrane segment at 128–148 (FNIADSCLTVGVIGLLLLYIV) threads the bilayer.

Belongs to the peptidase A8 family.

The protein resides in the cell membrane. The enzyme catalyses Release of signal peptides from bacterial membrane prolipoproteins. Hydrolyzes -Xaa-Yaa-Zaa-|-(S,diacylglyceryl)Cys-, in which Xaa is hydrophobic (preferably Leu), and Yaa (Ala or Ser) and Zaa (Gly or Ala) have small, neutral side chains.. The protein operates within protein modification; lipoprotein biosynthesis (signal peptide cleavage). This protein specifically catalyzes the removal of signal peptides from prolipoproteins. The polypeptide is Lipoprotein signal peptidase (Dehalococcoides mccartyi (strain ATCC BAA-2100 / JCM 16839 / KCTC 5957 / BAV1)).